We begin with the raw amino-acid sequence, 74 residues long: ATP synthase subunit c (74 aa).

2 helical membrane passes run 5-25 (LAHI…IGVG) and 49-69 (LFIG…VALL).

Belongs to the ATPase C chain family. As to quaternary structure, F-type ATPases have 2 components, F(1) - the catalytic core - and F(0) - the membrane proton channel. F(1) has five subunits: alpha(3), beta(3), gamma(1), delta(1), epsilon(1). F(0) has four main subunits: a(1), b(1), b'(1) and c(10-14). The alpha and beta chains form an alternating ring which encloses part of the gamma chain. F(1) is attached to F(0) by a central stalk formed by the gamma and epsilon chains, while a peripheral stalk is formed by the delta, b and b' chains.

The protein localises to the cell inner membrane. F(1)F(0) ATP synthase produces ATP from ADP in the presence of a proton or sodium gradient. F-type ATPases consist of two structural domains, F(1) containing the extramembraneous catalytic core and F(0) containing the membrane proton channel, linked together by a central stalk and a peripheral stalk. During catalysis, ATP synthesis in the catalytic domain of F(1) is coupled via a rotary mechanism of the central stalk subunits to proton translocation. Its function is as follows. Key component of the F(0) channel; it plays a direct role in translocation across the membrane. A homomeric c-ring of between 10-14 subunits forms the central stalk rotor element with the F(1) delta and epsilon subunits. The polypeptide is ATP synthase subunit c (Roseobacter denitrificans (strain ATCC 33942 / OCh 114) (Erythrobacter sp. (strain OCh 114))).